The chain runs to 1217 residues: DNA-directed RNA polymerase subunit beta' (1217 aa).

Zn(2+)-binding residues include Cys-60, Cys-62, Cys-75, and Cys-78. 3 residues coordinate Mg(2+): Asp-449, Asp-451, and Asp-453. Zn(2+) is bound by residues Cys-821, Cys-895, Cys-902, and Cys-905.

This sequence belongs to the RNA polymerase beta' chain family. As to quaternary structure, the RNAP catalytic core consists of 2 alpha, 1 beta, 1 beta' and 1 omega subunit. When a sigma factor is associated with the core the holoenzyme is formed, which can initiate transcription. Mg(2+) is required as a cofactor. It depends on Zn(2+) as a cofactor.

The catalysed reaction is RNA(n) + a ribonucleoside 5'-triphosphate = RNA(n+1) + diphosphate. Its function is as follows. DNA-dependent RNA polymerase catalyzes the transcription of DNA into RNA using the four ribonucleoside triphosphates as substrates. The chain is DNA-directed RNA polymerase subunit beta' from Lactobacillus acidophilus (strain ATCC 700396 / NCK56 / N2 / NCFM).